The following is a 316-amino-acid chain: KRR1 small subunit processome component (316 aa).

A KH domain is found at 122–192 (ACDVIKIGNF…VRRVVEDCMK (71 aa)). Over residues 279-304 (KKLNEQKEKQMEREIERQEERAKDFI) the composition is skewed to basic and acidic residues. A disordered region spans residues 279–316 (KKLNEQKEKQMEREIERQEERAKDFIAPEEEAYKPNQN).

Belongs to the KRR1 family. In terms of assembly, component of the ribosomal small subunit (SSU) processome composed of at least 40 protein subunits and snoRNA U3. Interacts with snoRNA U3. Interacts with MPP10, KRI1 and with ribosomal proteins RPS1A, RPS4A, RPS4B, RPS8A, RPS8B, RPS11A, RPS11B, RPS13, RPS24, RPS25, RPL4A, RPL7B, RPL8, RPL23, RPL25 and RPL28.

Its subcellular location is the nucleus. It localises to the nucleolus. Its function is as follows. Required for 40S ribosome biogenesis. Involved in nucleolar processing of pre-18S ribosomal RNA and ribosome assembly. Essential for vegetative growth. The polypeptide is KRR1 small subunit processome component (Saccharomyces cerevisiae (strain RM11-1a) (Baker's yeast)).